The following is a 331-amino-acid chain: Putative lipoprotein YerB (331 aa).

An N-terminal signal peptide occupies residues 1 to 19 (MKKWMTVCALCFVFFLLVS). The N-palmitoyl cysteine moiety is linked to residue C20. A lipid anchor (S-diacylglycerol cysteine) is attached at C20. Residue T97 is modified to Phosphothreonine. S103 carries the phosphoserine modification.

Interacts with PcrA. The interaction is not essential for cell viability or repair of UV-induced lesions.

It localises to the cell membrane. The polypeptide is Putative lipoprotein YerB (yerB) (Bacillus subtilis (strain 168)).